A 90-amino-acid chain; its full sequence is Small ribosomal subunit protein uS15 (90 aa).

It belongs to the universal ribosomal protein uS15 family. Part of the 30S ribosomal subunit. Forms a bridge to the 50S subunit in the 70S ribosome, contacting the 23S rRNA.

Functionally, one of the primary rRNA binding proteins, it binds directly to 16S rRNA where it helps nucleate assembly of the platform of the 30S subunit by binding and bridging several RNA helices of the 16S rRNA. Its function is as follows. Forms an intersubunit bridge (bridge B4) with the 23S rRNA of the 50S subunit in the ribosome. The protein is Small ribosomal subunit protein uS15 of Mycoplasmoides gallisepticum (strain R(low / passage 15 / clone 2)) (Mycoplasma gallisepticum).